A 233-amino-acid polypeptide reads, in one-letter code: Short chain dehydrogenase trt9 (233 aa).

NADP(+) contacts are provided by Asp-33, Arg-95, Tyr-127, Lys-131, and Val-160. Tyr-127 acts as the Proton donor in catalysis. The Lowers pKa of active site Tyr role is filled by Lys-131.

The protein belongs to the short-chain dehydrogenases/reductases (SDR) family.

Its pathway is secondary metabolite biosynthesis; terpenoid biosynthesis. Its function is as follows. Short chain dehydrogenase; part of the gene cluster that mediates the biosynthesis of terretonin, a fungal meroterpenoid that acts as a mycotoxin. The first step of the pathway is the synthesis of 3,5-dimethylorsellinic acid (DMOA) by the polyketide synthase trt4. DMOA is then prenylated into farnesyl-DMOA by the polyprenyl transferase trt2. Methylation by the methyltransferase trt5 then leads to farnesyl-DMOA methyl ester which is further subject to epoxidation by the FAD-dependent monooxygenase trt8 to yield epoxyfarnesyl-DMOA methyl ester. Cyclization of epoxyfarnesyl-DMOA methyl ester by the terpene cyclase trt1 leads to a tetracycle intermediate which is in turn converted to preterretonin. Dehydrogenase trt9 comes next to transform preterretonin to preterrenoid. The FAD-dependent monooxygenase trt3 is then required for the C-hydroxylation at C16 of preterrenoid to yield terrenoid. The cytochrome P450 trt6 catalyzes three successive oxidations to transform terrenoid into an unstable intermediate, which then undergoes the D-ring expansion and unusual rearrangement of the methoxy group to afford the core skeleton of terretonin. Trt14 catalyzes the D-ring expansion of terretonin involving intramolecular methoxy rearrangement as well as the hydrolysis of the expanded D-ring and the methyl ester moiety. Finally, the nonheme iron-dependent dioxygenase trt7 accomplishes the last two oxidation reactions steps to complete the biosynthesis of terretonin. Terretonin C is produced via spontaneous decarboxylation of the terretonin precursor. Another shunt product of the terretonin biosynthesis is dihydrofarnesyl-DMOA, derived from epoxyfarnesyl-DMOA through hydrolysis of the epoxide. The polypeptide is Short chain dehydrogenase trt9 (Aspergillus terreus (strain NIH 2624 / FGSC A1156)).